The primary structure comprises 441 residues: Ribosomal protein uS12 methylthiotransferase RimO (441 aa).

In terms of domain architecture, MTTase N-terminal spans 8–118 (PKIGFVSLGC…VLQHVHHYVP (111 aa)). [4Fe-4S] cluster-binding residues include Cys-17, Cys-53, Cys-82, Cys-150, Cys-154, and Cys-157. One can recognise a Radical SAM core domain in the interval 136-373 (LTPRHYAYLK…MQLQQQISAE (238 aa)). Positions 376-441 (QEKVGREILV…DEYDLWGSRV (66 aa)) constitute a TRAM domain.

It belongs to the methylthiotransferase family. RimO subfamily. [4Fe-4S] cluster is required as a cofactor.

It is found in the cytoplasm. It carries out the reaction L-aspartate(89)-[ribosomal protein uS12]-hydrogen + (sulfur carrier)-SH + AH2 + 2 S-adenosyl-L-methionine = 3-methylsulfanyl-L-aspartate(89)-[ribosomal protein uS12]-hydrogen + (sulfur carrier)-H + 5'-deoxyadenosine + L-methionine + A + S-adenosyl-L-homocysteine + 2 H(+). Its function is as follows. Catalyzes the methylthiolation of an aspartic acid residue of ribosomal protein uS12. The chain is Ribosomal protein uS12 methylthiotransferase RimO from Salmonella arizonae (strain ATCC BAA-731 / CDC346-86 / RSK2980).